The chain runs to 535 residues: T-complex protein 1 subunit beta (535 aa).

N-acetylalanine is present on Ala-2. Ser-3 carries the post-translational modification Phosphoserine. At Lys-13 the chain carries N6-acetyllysine. Gly-44 is a binding site for ADP. Residue Gly-44 coordinates ATP. Asp-97 is a Mg(2+) binding site. Residues Gly-98, Thr-99, Thr-100, Ser-101, Ser-168, and Ser-169 each contribute to the ADP site. 3 residues coordinate ATP: Gly-98, Thr-99, and Thr-100. Position 181 is an N6-acetyllysine (Lys-181). A Glycyl lysine isopeptide (Lys-Gly) (interchain with G-Cter in SUMO2) cross-link involves residue Lys-248. Ser-260 carries the phosphoserine modification. Residue Thr-261 is modified to Phosphothreonine. ADP is bound by residues Gly-410, Glu-495, and Lys-500. Positions 495 and 500 each coordinate ATP.

The protein belongs to the TCP-1 chaperonin family. As to quaternary structure, component of the chaperonin-containing T-complex (TRiC), a hexadecamer composed of two identical back-to-back stacked rings enclosing a protein folding chamber. Each ring is made up of eight different subunits: TCP1/CCT1, CCT2, CCT3, CCT4, CCT5, CCT6A/CCT6, CCT7, CCT8. Interacts with PACRG. Interacts with FLCN. Interacts with DLEC1. Interacts with SVEP1. In terms of processing, the N-terminus is blocked.

Its subcellular location is the cytoplasm. It catalyses the reaction ATP + H2O = ADP + phosphate + H(+). Its function is as follows. Component of the chaperonin-containing T-complex (TRiC), a molecular chaperone complex that assists the folding of actin, tubulin and other proteins upon ATP hydrolysis. The TRiC complex mediates the folding of WRAP53/TCAB1, thereby regulating telomere maintenance. As part of the TRiC complex may play a role in the assembly of BBSome, a complex involved in ciliogenesis regulating transports vesicles to the cilia. The polypeptide is T-complex protein 1 subunit beta (Cct2) (Mus musculus (Mouse)).